The sequence spans 1607 residues: MFLRSDLAVTHWVSRSMRKLFLVLSLLLSQAAHLEGRKDNQFLWKTGPWGRCAGDCGPGGAQSRAVWCFHIEGWTSPMSNCDESSQPPKERSCFRVCDWHSDLFQWEVSDWHRCLLVPGAQGEPRPRAVECVTAQHGLQHRTVRCLQKLNRTMVSNEICEHFAPQPPTEQACLIPCPRDCVVSEFSPWSTCPEGCGKKLQHRTRVAIAPPLYGGLQCPNLTESRACEAPVSCPLGKEEYSFSLKVGPWSKCRLPHLKEVDLSGRNIQDFSSDSNEQVTLTHQSYKAHHHSQPGDVVIGFQTRQVWCTRSDGRNALLSLCVRDSFPLTVQPCVMPKDCETSEWSPWSPCSKTCRSGTLSPGVRSRSRNVKHIAIGGGQECPELLEKETCIAEGEFLQPCPRYSWRTSEWKECQVSLLLEQHDPLWHETGPICGGGIQTREVYCAQSLPATIASRTKEVSRPVERTLCLGPAPSASQLCNVPCSMDCIVSSWSTWGPCVFENCHDPQGKKGFRMRQRHVLMESTGPMGRCPHLAESVPCEDPMCHRWLASEGICIADHGKCGLGHRILKAVCQNERGEEVSGGLCPVPPPPERMACEIPCRMDCVVSEWTVWSSCSQSCSNKNSDGKQTRSRSILALAGEGGKTCPSSQELQEYRLCNDHSCTQLYWETSAWGSCSENTLVTALNVTIGWNGEATCGVGIQTRKVFCIKSHVGQVMTKRCPESTRPETVRPCFLPCKKDCLVTAFSEWTPCPRPCQPGNTTIKQSRYRIIIQEAANGGQECPDTLFEERECEDISLCPSYRWKPQKWSSCILVPESIRQGRTGTSEACGKGLQTRAVSCISDDNQSAEMTECLKQMNGMPPLVQECTIPCRDDCTFTPWSKFTPCSKNCEATQIRRRQLTGKSRKKEKCQDASLYPLVEMEPCPCDTFMSHPYGNWSACILPEGKRDAQQGGLWVQGDDKECGEGVRFRAIACSNINGRPVDPSFCNSSGYIQEACVIPCPFDCKLSDWSSWGSCSSSCGIGVRIRSKWLKEKPYSGGRPCPKLDLKNQVHEAVPCYSECDQYSWVVEHWSPCKINNELRSPRCGRGTQSRRIRCVSTADREGGAVNRSLCNQDDAPQETQACSLLCPSECVMSEWGTWSRCPQSCDPHAMQRRTRHLLRPSLNSRTCGEDSQVRPCLLNENCFQFQYNLTEWSTCQLSENVSCGQGVRTRLLSCVRSDGKSVSMDHCEQRNLEKPQRMSIPCLVECVVNCQLSGWTTWTECSQTCGQGGRMSRTRFIIMPTQGEGRQCPTELTQQKPCPVTPCYSWVLGNWSACKLEGGDCGEGVQVRSFSCVVHNGSISHTAVPVEEALCGEVPFQEGILKQLCSVPCPGDCHITPWSEWSKCELTCIDGRSFETTGRQSRSRTFIIQSFENQDSCPQQVLETRPCTGGKCYHYIWKASLWNNNERTVWCQRSDGLNVTGGCSPQARPAAIRQCIPACKKPFSYCTQGGVCGCEKGYTEIMRSSGFLDYCMKVPGSEDKKADVKNLSGKNRPVNSKIHDIFKGWSLQPLDPDGRVKMWVYGVSGGSFLIMIFLVFTSYLVCKKPKPHQSTPRHQKPLTLAYDGDLDM.

The signal sequence occupies residues 1 to 31 (MFLRSDLAVTHWVSRSMRKLFLVLSLLLSQA). Over 32-1556 (AHLEGRKDNQ…QPLDPDGRVK (1525 aa)) the chain is Extracellular. 18 TSP type-1 domains span residues 40–98 (NQFL…RVCD), 102–177 (DLFQ…IPCP), 179–233 (DCVV…VSCP), 336–392 (DCET…IAEG), 399–482 (PRYS…VPCS), 484–543 (DCIV…PMCH), 601–661 (DCVV…HSCT), 662–735 (QLYW…LPCK), 737–796 (DCLV…SLCP), 797–869 (SYRW…IPCR), 871–924 (DCTF…CPCD), 925–999 (TFMS…IPCP), 1001–1126 (DCKL…LLCP), 1128–1182 (ECVM…ENCF), 1183–1246 (QFQY…VECV), 1248–1303 (NCQL…TPCY), 1304–1369 (SWVL…VPCP), and 1371–1432 (DCHI…GKCY). Residues N150 and N219 are each glycosylated (N-linked (GlcNAc...) asparagine). 3 disulfides stabilise this stretch: C411–C477, C431–C481, and C442–C466. 3 disulfide bridges follow: C602–C643, C613–C617, and C655–C660. N683 carries N-linked (GlcNAc...) asparagine glycosylation. Intrachain disulfides connect C738–C779, C749–C753, and C789–C795. N757 is a glycosylation site (N-linked (GlcNAc...) asparagine). N-linked (GlcNAc...) asparagine glycosylation occurs at N842. The N-linked (GlcNAc...) asparagine glycan is linked to N933. Disulfide bonds link C937–C994, C960–C998, C971–C984, C1002–C1039, and C1013–C1017. N-linked (GlcNAc...) asparagine glycosylation occurs at N985. N-linked (GlcNAc...) asparagine glycosylation occurs at N1105. Cysteines 1121 and 1125 form a disulfide. 2 N-linked (GlcNAc...) asparagine glycosylation sites follow: N1187 and N1199. 3 cysteine pairs are disulfide-bonded: C1249–C1287, C1260–C1264, and C1297–C1302. N1309 and N1335 each carry an N-linked (GlcNAc...) asparagine glycan. Cystine bridges form between C1372–C1416, C1383–C1387, and C1426–C1431. N-linked (GlcNAc...) asparagine glycosylation is found at N1457 and N1525. The helical transmembrane segment at 1557–1577 (MWVYGVSGGSFLIMIFLVFTS) threads the bilayer. The Cytoplasmic segment spans residues 1578-1607 (YLVCKKPKPHQSTPRHQKPLTLAYDGDLDM).

It localises to the membrane. The protein is Thrombospondin type-1 domain-containing protein 7B of Mus musculus (Mouse).